The following is a 277-amino-acid chain: Putative envelope-preserving system protein Rv2742c (277 aa).

The segment covering R31–Q54 has biased composition (basic and acidic residues). 3 disordered regions span residues R31 to R70, Q113 to R133, and R180 to D210. The span at P116 to R133 shows a compositional bias: basic residues.

As to quaternary structure, interacts with Rv2743c.

In terms of biological role, involved in preservation of envelope integrity and tolerance to surface stress. Reverses the inhibitory effect of PspA on ClgR activity. Facilitates intracellular growth of M.tuberculosis. The polypeptide is Putative envelope-preserving system protein Rv2742c (Mycobacterium tuberculosis (strain ATCC 25618 / H37Rv)).